A 90-amino-acid chain; its full sequence is MALNLEKKQEIIKAFATKANDTGSCEVQVALLNERIKLLTEHLKTNPKDHSSRLGLLKLVAQRRNLLKYIKRTDHVRYVVLIEKLGIKDR.

This sequence belongs to the universal ribosomal protein uS15 family. In terms of assembly, part of the 30S ribosomal subunit. Forms a bridge to the 50S subunit in the 70S ribosome, contacting the 23S rRNA.

One of the primary rRNA binding proteins, it binds directly to 16S rRNA where it helps nucleate assembly of the platform of the 30S subunit by binding and bridging several RNA helices of the 16S rRNA. In terms of biological role, forms an intersubunit bridge (bridge B4) with the 23S rRNA of the 50S subunit in the ribosome. This Helicobacter pylori (strain J99 / ATCC 700824) (Campylobacter pylori J99) protein is Small ribosomal subunit protein uS15.